The following is a 266-amino-acid chain: tRNA pseudouridine synthase A (266 aa).

Aspartate 55 acts as the Nucleophile in catalysis. Tyrosine 110 is a binding site for substrate.

Belongs to the tRNA pseudouridine synthase TruA family.

The enzyme catalyses uridine(38/39/40) in tRNA = pseudouridine(38/39/40) in tRNA. Its function is as follows. Formation of pseudouridine at positions 38, 39 and 40 in the anticodon stem and loop of transfer RNAs. In Thermococcus sibiricus (strain DSM 12597 / MM 739), this protein is tRNA pseudouridine synthase A.